Here is a 364-residue protein sequence, read N- to C-terminus: NGLGLQNFPELKNDTFLRAAWGEETDYTPVWCMRQAGRYLPEFRETRAAQDFFSTCRSPEACCELTLEPVRRFPLDAAIIFSDILVVPQALAMEVTMVPGKGPSFPEPLREERDLERLRDPAAVASELGYVFQAITLTRQQLAGRVPLIGFAGAPWTLMTYMVEGGSFKTMAQAKRWLYQKPVASHKLLGILTHALVPYLIGQVAAGAQALQLFESHAGHLGSELFSKFALPYIRDVAKRVKAGLQKAGLTRMPMIIFAKDGHFALEELAQAGYEVVGLDWTVAPKKAREPVGKTVTLQGELDPCALYASEEEIGRLVQQMLNDFGPQRYIANLGHGLYPDMDPEHVGAFLDAVHKHSRLLRQN.

Positions 34, 36, 38, 47, 83, 161, 216, and 336 each coordinate coproporphyrinogen I. Residues R34, A36, and R38 each contribute to the coproporphyrinogen III site. Residues D83, Y161, S216, and H336 each coordinate coproporphyrinogen III.

Belongs to the uroporphyrinogen decarboxylase family. As to quaternary structure, homodimer.

Its subcellular location is the cytoplasm. It is found in the cytosol. The catalysed reaction is uroporphyrinogen III + 4 H(+) = coproporphyrinogen III + 4 CO2. It carries out the reaction uroporphyrinogen I + 4 H(+) = coproporphyrinogen I + 4 CO2. The protein operates within porphyrin-containing compound metabolism; protoporphyrin-IX biosynthesis; coproporphyrinogen-III from 5-aminolevulinate: step 4/4. Its function is as follows. Catalyzes the sequential decarboxylation of the four acetate side chains of uroporphyrinogen to form coproporphyrinogen and participates in the fifth step in the heme biosynthetic pathway. Isomer I or isomer III of uroporphyrinogen may serve as substrate, but only coproporphyrinogen III can ultimately be converted to heme. In vitro also decarboxylates pentacarboxylate porphyrinogen I. In Rattus norvegicus (Rat), this protein is Uroporphyrinogen decarboxylase.